The primary structure comprises 429 residues: L-dopachrome tautomerase yellow-f (429 aa).

The N-terminal stretch at 1 to 23 (MLSLDVLLLCAISGFQLLISADG) is a signal peptide. N-linked (GlcNAc...) asparagine glycans are attached at residues asparagine 133 and asparagine 372.

This sequence belongs to the major royal jelly protein family.

It localises to the secreted. It carries out the reaction L-dopachrome = 5,6-dihydroxyindole-2-carboxylate. It functions in the pathway pigment biosynthesis; melanin biosynthesis. Tautomerization of L-dopachrome with decarboxylation to give 5,6-dihydroxyindole (DHI). Also catalyzes the tautomerization of the methyl ester of L-dopachrome and dopamine chrome. May play a role in melanization reactions during late pupal and adult stages. May play a role in melanization reactions during larval and early pupal stages. This Drosophila melanogaster (Fruit fly) protein is L-dopachrome tautomerase yellow-f.